The chain runs to 151 residues: Deoxyuridine 5'-triphosphate nucleotidohydrolase (151 aa).

Residues 70 to 72 (RSG), Asn83, 87 to 89 (LID), and Met97 each bind substrate.

Belongs to the dUTPase family. Requires Mg(2+) as cofactor.

It carries out the reaction dUTP + H2O = dUMP + diphosphate + H(+). It functions in the pathway pyrimidine metabolism; dUMP biosynthesis; dUMP from dCTP (dUTP route): step 2/2. This enzyme is involved in nucleotide metabolism: it produces dUMP, the immediate precursor of thymidine nucleotides and it decreases the intracellular concentration of dUTP so that uracil cannot be incorporated into DNA. The protein is Deoxyuridine 5'-triphosphate nucleotidohydrolase of Salmonella enteritidis PT4 (strain P125109).